The sequence spans 372 residues: Septin-1 (372 aa).

In terms of domain architecture, Septin-type G spans 27–301 (KGFDFTLMVA…EGYRARCLQS (275 aa)). The G1 motif stretch occupies residues 37 to 44 (GESGLGKS). GTP is bound by residues 37–44 (GESGLGKS), T71, G97, and 176–184 (KADALMPQE). The G3 motif stretch occupies residues 94-97 (DTPG). The interval 175-178 (GKAD) is G4 motif. Phosphoserine is present on S211. Positions 234 and 250 each coordinate GTP. Position 253 is a phosphoserine; by AURKB (S253). A Phosphothreonine modification is found at T256. S312 and S320 each carry phosphoserine; by AURKB. Positions 352–372 (LEKMQAQMQQSQAQGEQSDAL) are disordered. Residues 355–372 (MQAQMQQSQAQGEQSDAL) show a composition bias toward low complexity.

Belongs to the TRAFAC class TrmE-Era-EngA-EngB-Septin-like GTPase superfamily. Septin GTPase family. Septins polymerize into heterooligomeric protein complexes that form filaments, and can associate with cellular membranes, actin filaments and microtubules. GTPase activity is required for filament formation. Interacts with AURKB. As to expression, expressed at high levels in lymphoid and hematopoietic tissues.

It localises to the cytoplasm. The protein localises to the cytoskeleton. The protein resides in the microtubule organizing center. It is found in the centrosome. Its subcellular location is the midbody. Functionally, filament-forming cytoskeletal GTPase. May play a role in cytokinesis (Potential). The protein is Septin-1 of Homo sapiens (Human).